Here is a 535-residue protein sequence, read N- to C-terminus: CTP synthase (535 aa).

Residues 1 to 268 (MPNKYIVVTG…VSKILSRLKL (268 aa)) form an amidoligase domain region. Ser14 is a CTP binding site. Ser14 contributes to the UTP binding site. ATP is bound at residue 15–20 (SVGKGT). Tyr55 contacts L-glutamine. Position 72 (Asp72) interacts with ATP. Residues Asp72 and Glu142 each contribute to the Mg(2+) site. CTP contacts are provided by residues 149–151 (DIE), 189–194 (KTKPLQ), and Lys225. UTP is bound by residues 189-194 (KTKPLQ) and Lys225. Val243 serves as a coordination point for ATP. The region spanning 302 to 535 (YTKLKDSYIS…LGFIRAVASL (234 aa)) is the Glutamine amidotransferase type-1 domain. Gly359 contacts L-glutamine. The active-site Nucleophile; for glutamine hydrolysis is the Cys386. Residues 387–390 (FGFQ), Glu410, and Arg467 each bind L-glutamine. Residues His511 and Glu513 contribute to the active site.

The protein belongs to the CTP synthase family. In terms of assembly, homotetramer in the presence of ATP and UTP. The enzyme dissociates into homodimers in the absence of substrate nucleotides.

The enzyme catalyses UTP + L-glutamine + ATP + H2O = CTP + L-glutamate + ADP + phosphate + 2 H(+). The catalysed reaction is L-glutamine + H2O = L-glutamate + NH4(+). It catalyses the reaction UTP + NH4(+) + ATP = CTP + ADP + phosphate + 2 H(+). It participates in pyrimidine metabolism; CTP biosynthesis via de novo pathway; CTP from UDP: step 2/2. Its activity is regulated as follows. Allosterically activated by GTP, when glutamine is the substrate; GTP has no effect on the reaction when ammonia is the substrate. The allosteric effector GTP functions by stabilizing the protein conformation that binds the tetrahedral intermediate(s) formed during glutamine hydrolysis. Inhibited by the product CTP, via allosteric rather than competitive inhibition. In terms of biological role, catalyzes the ATP-dependent amination of UTP to CTP with either L-glutamine or ammonia as the source of nitrogen. Regulates intracellular CTP levels through interactions with the four ribonucleotide triphosphates. The protein is CTP synthase of Saccharolobus solfataricus (strain ATCC 35092 / DSM 1617 / JCM 11322 / P2) (Sulfolobus solfataricus).